Here is a 416-residue protein sequence, read N- to C-terminus: Thyroid hormone receptor alpha (416 aa).

The interval 1 to 30 (MEPISNVEDPNSSEGDEKRWPDGPKRKRKN) is disordered. The modulating stretch occupies residues 1–58 (MEPISNVEDPNSSEGDEKRWPDGPKRKRKNSTCSVKSMSALSLSVQGYIPSYLEKDEP). Residues 15-24 (GDEKRWPDGP) are compositionally biased toward basic and acidic residues. Zn(2+) is bound by residues C59, C62, C76, C79, C97, C103, C113, and C116. 2 consecutive NR C4-type zinc fingers follow at residues 59–79 (CVVC…CEGC) and 97–121 (CKYD…FRKC). The segment at residues 59–133 (CVVCGDKATG…VCMAMDLVLD (75 aa)) is a DNA-binding region (nuclear receptor). The 245-residue stretch at 169–413 (SEWELIRHVT…PPLFLEVFED (245 aa)) folds into the NR LBD domain. 3,3',5-triiodo-L-thyronine contacts are provided by R234 and S283.

The protein belongs to the nuclear hormone receptor family. NR1 subfamily.

The protein resides in the nucleus. Nuclear hormone receptor that can act as a repressor or activator of transcription. High affinity receptor for thyroid hormones, including triiodothyronine and thyroxine. This chain is Thyroid hormone receptor alpha (thra1), found in Salmo salar (Atlantic salmon).